The sequence spans 499 residues: Phenylalanine--tRNA ligase alpha subunit (499 aa).

L-phenylalanine-binding positions include T342, 381–383, and F422; that span reads QID. A Mg(2+)-binding site is contributed by E424. F447 is a binding site for L-phenylalanine.

Belongs to the class-II aminoacyl-tRNA synthetase family. Phe-tRNA synthetase alpha subunit type 2 subfamily. Tetramer of two alpha and two beta subunits. The cofactor is Mg(2+).

The protein resides in the cytoplasm. It carries out the reaction tRNA(Phe) + L-phenylalanine + ATP = L-phenylalanyl-tRNA(Phe) + AMP + diphosphate + H(+). This is Phenylalanine--tRNA ligase alpha subunit from Pyrococcus horikoshii (strain ATCC 700860 / DSM 12428 / JCM 9974 / NBRC 100139 / OT-3).